Reading from the N-terminus, the 623-residue chain is MSRRLLPRAEKRRRRLEQRQQPDEQLRRAGAMVKMAAAGGGGGGGRYYGGGNEGGRAPKRLKTENAGDQHGGGGGGGSGAAGGGGGENYDDPHKTPASPVVHIRGLIDGVVEADLVEALQEFGPISYVVVMPKKRQALVEFEDVLGACNAVNYAADNQIYIAGHPAFVNYSTSQKISRPGDSDDSRSVNSVLLFTILNPIYSITTDVLYTICNPCGPVQRIVIFRKNGVQAMVEFDSVQSAQRAKASLNGADIYSGCCTLKIEYAKPTRLNVFKNDQDTWDYTNPNLSGQGDPGSNPNKRQRQPPLLGDHPAEYGEGRGFPSVDSRGSCAPARRPPRKFSPVLPLFPSHPPGGPHGGYHSHYHDEGYGPPPPHYEGRRMGPPVGGHRRGPSRYGPQYGHPPPPPPPPDYGPHADSPVLMVYGLDQSKMNCDRVFNVFCLYGNVEKVKFMKSKPGAAMVEMADGYAVDRAITHLNNNFMFGQKMNVCVSKQPAIMPGQSYGLEDGSCSYKDFSESRNNRFSTPEQAAKNRIQHPSNVLHFFNAPLEVTEENFFEICDELGVKRPTSVKVFSGKSERSSSGLLEWDSKSDALETLGFLNHYQMKNPNGPYPYTLKLCFSTAQHAS.

Residues M1–L16 show a composition bias toward basic residues. Residues M1–A97 are disordered. The segment covering E17–R27 has biased composition (basic and acidic residues). Residues R28–A37 show a composition bias toward low complexity. Residues A38–G54 are compositionally biased toward gly residues. Residues K59 and K62 each participate in a glycyl lysine isopeptide (Lys-Gly) (interchain with G-Cter in SUMO2) cross-link. Over residues Q69–E87 the composition is skewed to gly residues. A Phosphoserine modification is found at S98. The RRM 1 domain occupies P99 to S173. K133 is covalently cross-linked (Glycyl lysine isopeptide (Lys-Gly) (interchain with G-Cter in SUMO2)). The residue at position 182 (S182) is a Phosphoserine. Residues S190–P267 enclose the RRM 2 domain. K266 carries the N6-acetyllysine modification. Over residues D281–N298 the composition is skewed to polar residues. The disordered stretch occupies residues D281–A413. A phosphoserine mark is found at S288 and S295. Residue K299 forms a Glycyl lysine isopeptide (Lys-Gly) (interchain with G-Cter in SUMO2) linkage. 2 positions are modified to asymmetric dimethylarginine: R388 and R392. Pro residues predominate over residues G398–Y409. Residue S415 is modified to Phosphoserine. RRM domains lie at P416–Q490 and S498–K586. S578 is modified (phosphoserine; by CaMK4). K602 participates in a covalent cross-link: Glycyl lysine isopeptide (Lys-Gly) (interchain with G-Cter in SUMO2).

Identified in a IGF2BP1-dependent mRNP granule complex containing untranslated mRNAs. Interacts with HNRNPLL. Interacts with APEX1; the interaction is DNA-dependent. Component of a complex with SETD2. Interacts with ELAVL1. Part of a transcription inhibitory ribonucleoprotein complex composed at least of the circular RNA circZNF827, ZNF827 and HNRNPK. Interacts with CHD8 in an RNA-dependent manner. Post-translationally, several isoelectric forms of the L protein are probably the results of post-translational modifications. Phosphorylation at Ser-578 by CaMK4 enhances interaction with a CaMK4-responsive RNA element (CaRRE1), and prevents inclusion of the stress axis-regulated exon (STREX) of the KCNMA1 potassium channel transcripts upon membrane depolarization.

The protein localises to the nucleus. Its subcellular location is the nucleoplasm. It localises to the cytoplasm. Its function is as follows. Splicing factor binding to exonic or intronic sites and acting as either an activator or repressor of exon inclusion. Exhibits a binding preference for CA-rich elements. Component of the heterogeneous nuclear ribonucleoprotein (hnRNP) complexes and associated with most nascent transcripts. Associates, together with APEX1, to the negative calcium responsive element (nCaRE) B2 of the APEX2 promoter. As part of a ribonucleoprotein complex composed at least of ZNF827, HNRNPK and the circular RNA circZNF827 that nucleates the complex on chromatin, may negatively regulate the transcription of genes involved in neuronal differentiation. Regulates alternative splicing of a core group of genes involved in neuronal differentiation, likely by mediating H3K36me3-coupled transcription elongation and co-transcriptional RNA processing via interaction with CHD8. The sequence is that of Heterogeneous nuclear ribonucleoprotein L from Rattus norvegicus (Rat).